The following is a 551-amino-acid chain: Solute carrier family 22 member 13 (551 aa).

The Cytoplasmic portion of the chain corresponds to Met-1–Gln-20. A helical transmembrane segment spans residues Leu-21–Phe-41. Residues Met-42–Asp-138 are Extracellular-facing. Residues Asn-57, Asn-61, Asn-92, and Asn-104 are each glycosylated (N-linked (GlcNAc...) asparagine). Residues Thr-139–Cys-159 form a helical membrane-spanning segment. Over Asp-160 to Thr-167 the chain is Cytoplasmic. A helical membrane pass occupies residues Ile-168–Phe-188. Over Glu-189–Arg-195 the chain is Extracellular. The helical transmembrane segment at Phe-196–Trp-216 threads the bilayer. The Cytoplasmic portion of the chain corresponds to Val-217–Gln-224. A helical membrane pass occupies residues Ala-225–Tyr-245. The Extracellular portion of the chain corresponds to Gly-246 to Arg-251. The helical transmembrane segment at Leu-252–Pro-272 threads the bilayer. The Cytoplasmic portion of the chain corresponds to Glu-273 to Lys-332. A helical membrane pass occupies residues Val-333 to Leu-353. Gln-354 is a topological domain (extracellular). The helical transmembrane segment at Val-355–Pro-375 threads the bilayer. Residues Ala-376 to Leu-397 lie on the Cytoplasmic side of the membrane. A helical membrane pass occupies residues Val-398–Val-418. Topologically, residues Thr-419–Met-427 are extracellular. The helical transmembrane segment at Ala-428 to Leu-448 threads the bilayer. At Arg-449–Gly-452 the chain is on the cytoplasmic side. A helical membrane pass occupies residues Met-453–Leu-473. At Gly-474–Ala-478 the chain is on the extracellular side. Residues Ala-479–Leu-499 traverse the membrane as a helical segment. The Cytoplasmic portion of the chain corresponds to Pro-500–Phe-551. The tract at residues Leu-511 to Phe-551 is disordered. Residues Pro-527 to Gly-536 are compositionally biased toward basic and acidic residues. A compositionally biased stretch (polar residues) spans Arg-537 to Phe-551.

The protein belongs to the major facilitator (TC 2.A.1) superfamily. Organic cation transporter (TC 2.A.1.19) family. Post-translationally, glycosylated. In terms of tissue distribution, ubiquitous. Highly expressed in kidneys and to a weaker extent in brain, heart, and intestine. In kidneys, expressed in proximal convoluted tubule. In kidneys, also expressed in cortical collecting duct, whereas glomerulus and thick ascending limb exhibit no expression.

The protein localises to the apical cell membrane. The enzyme catalyses urate(out) + (S)-lactate(in) = urate(in) + (S)-lactate(out). The catalysed reaction is urate(out) + succinate(in) = urate(in) + succinate(out). It catalyses the reaction urate(out) + glutathione(in) = urate(in) + glutathione(out). It carries out the reaction nicotinate(in) + urate(out) = nicotinate(out) + urate(in). The enzyme catalyses orotate(out) + a carboxylate(in) = orotate(in) + a carboxylate(out). Functionally, anion antiporter that mediates the transport of urate, orotate and nicotinate in exchange for organic or inorganic anions. Translocates urate and orotate across the apical membrane of proximal tubule epithelial cells and involved in urate renal reabsorption. Possibly involved in orotate renal reabsorption and nicotinate intestinal reabsorption. Mediates urate uptake by an exchange with organic anions such as (S)-lactate, succinate, glutathione and nicotinate. Urate and orotate transports are Cl(-)-dependent. Shows similar transport characteristics as the urate/orotate renal antiporter SLC22A12/URAT1 and may act as a compensator of SLC22A12/URAT1 in certain conditions. This chain is Solute carrier family 22 member 13, found in Homo sapiens (Human).